A 271-amino-acid polypeptide reads, in one-letter code: NH(3)-dependent NAD(+) synthetase (271 aa).

43–50 (GISGGQDS) is a binding site for ATP. D49 is a Mg(2+) binding site. R137 serves as a coordination point for deamido-NAD(+). T157 lines the ATP pocket. E162 lines the Mg(2+) pocket. K170 and D177 together coordinate deamido-NAD(+). The ATP site is built by K186 and T208. 257–258 (HK) lines the deamido-NAD(+) pocket.

The protein belongs to the NAD synthetase family. As to quaternary structure, homodimer.

The enzyme catalyses deamido-NAD(+) + NH4(+) + ATP = AMP + diphosphate + NAD(+) + H(+). It participates in cofactor biosynthesis; NAD(+) biosynthesis; NAD(+) from deamido-NAD(+) (ammonia route): step 1/1. Functionally, catalyzes the ATP-dependent amidation of deamido-NAD to form NAD. Uses ammonia as a nitrogen source. This chain is NH(3)-dependent NAD(+) synthetase, found in Exiguobacterium sibiricum (strain DSM 17290 / CCUG 55495 / CIP 109462 / JCM 13490 / 255-15).